The following is a 227-amino-acid chain: Protein lin-28 (227 aa).

Positions 1-17 (MSTVVSEGRNDGNNRYS) are enriched in polar residues. The disordered stretch occupies residues 1–27 (MSTVVSEGRNDGNNRYSPQDEVEDRLP). The CSD domain occupies 52–120 (RYFGSCKWFN…GREAYAVSGE (69 aa)). CCHC-type zinc fingers lie at residues 143-160 (RCFRCGKFATHKAKSCPN) and 166-183 (KVCYTCGSEEHVSSICPE). Positions 144, 147, 153, 158, 168, 171, 176, and 181 each coordinate Zn(2+). Residues 181–227 (CPERRRKHRPEQVAAEEAEAARMAAEKSSPTTSDDDIREKNSNSSDE) form a disordered region.

This sequence belongs to the lin-28 family. Component of a complex at least containing lep-2, lin-28 and the long non-coding RNA lep-5, which mediates the degradation of lin-28. Post-translationally, cleavage by caspase ced-3 during larval development probably induces lin-28 degradation.

It is found in the cytoplasm. Functionally, heterochronic protein which controls the choice of stage specific cell fates. Regulates the timing of the second larval stage events (L2 events) in the hypodermis. May negatively regulate the larval to adult transition via the suppression of the microRNA (miRNA) let-7 during L3. Through this regulatory role, controls the timing of the sexual maturation of the nervous system. Also has a role in the fox-1-sex-1-mediated determination of sexual fate. Plays a role in governing the developmental timing of male tail tip morphogenesis. Plays a role in controlling the seam cell number during larval stages. Plays a role in vulval development. The polypeptide is Protein lin-28 (Caenorhabditis elegans).